Consider the following 341-residue polypeptide: 4-hydroxy-2-oxovalerate aldolase 2 (341 aa).

One can recognise a Pyruvate carboxyltransferase domain in the interval 8-260; it reads VTVHDMTLRD…ETGVDVAKIT (253 aa). 16–17 contacts substrate; that stretch reads RD. Asp17 is a binding site for Mn(2+). Catalysis depends on His20, which acts as the Proton acceptor. Substrate is bound by residues Ser170 and His199. Residues His199 and His201 each coordinate Mn(2+). Tyr290 serves as a coordination point for substrate.

This sequence belongs to the 4-hydroxy-2-oxovalerate aldolase family.

The enzyme catalyses (S)-4-hydroxy-2-oxopentanoate = acetaldehyde + pyruvate. This is 4-hydroxy-2-oxovalerate aldolase 2 from Dechloromonas aromatica (strain RCB).